The sequence spans 528 residues: ATP synthase subunit alpha (528 aa).

Gly169 to Thr176 serves as a coordination point for ATP.

The protein belongs to the ATPase alpha/beta chains family. As to quaternary structure, F-type ATPases have 2 components, CF(1) - the catalytic core - and CF(0) - the membrane proton channel. CF(1) has five subunits: alpha(3), beta(3), gamma(1), delta(1), epsilon(1). CF(0) has three main subunits: a(1), b(2) and c(9-12). The alpha and beta chains form an alternating ring which encloses part of the gamma chain. CF(1) is attached to CF(0) by a central stalk formed by the gamma and epsilon chains, while a peripheral stalk is formed by the delta and b chains.

Its subcellular location is the cell membrane. It carries out the reaction ATP + H2O + 4 H(+)(in) = ADP + phosphate + 5 H(+)(out). In terms of biological role, produces ATP from ADP in the presence of a proton gradient across the membrane. The alpha chain is a regulatory subunit. This is ATP synthase subunit alpha from Mycoplasmopsis agalactiae (strain NCTC 10123 / CIP 59.7 / PG2) (Mycoplasma agalactiae).